A 349-amino-acid polypeptide reads, in one-letter code: 2-oxoglutarate-Fe(II) type oxidoreductase hxnY (349 aa).

Residues 178 to 282 (GVATMRMLHY…RYSIPFFFSG (105 aa)) enclose the Fe2OG dioxygenase domain. Positions 205, 207, and 263 each coordinate Fe cation. Arg273 contributes to the 2-oxoglutarate binding site.

This sequence belongs to the iron/ascorbate-dependent oxidoreductase family. It depends on Fe(2+) as a cofactor.

In terms of biological role, 2-oxoglutarate-Fe(II) type oxidoreductase, part of the hnx cluster involved in the purine degradation. The nicotinate hydroxylase hnxS accepts nicotinate as a substrate and catalyzes the first step of nicotinate catabolism. The major facilitator-type transporters hxnP and hxnZ are probably involved in the uptake of nicotinate-derived metabolites, and the oxidoreductases hxnT and hxnY in the further metabolism of 6-OH nicotinic acid. The chain is 2-oxoglutarate-Fe(II) type oxidoreductase hxnY from Emericella nidulans (strain FGSC A4 / ATCC 38163 / CBS 112.46 / NRRL 194 / M139) (Aspergillus nidulans).